Here is a 706-residue protein sequence, read N- to C-terminus: DNA ligase (706 aa).

NAD(+) contacts are provided by residues 40–44 (DLQYD), 89–90 (SI), and glutamate 120. Lysine 122 acts as the N6-AMP-lysine intermediate in catalysis. NAD(+)-binding residues include arginine 143, glutamate 190, lysine 306, and lysine 330. The Zn(2+) site is built by cysteine 424, cysteine 427, cysteine 442, and cysteine 447. Positions 625 to 706 (EANLPLAGKN…FRLRYETEAT (82 aa)) constitute a BRCT domain.

The protein belongs to the NAD-dependent DNA ligase family. LigA subfamily. It depends on Mg(2+) as a cofactor. Mn(2+) serves as cofactor.

It carries out the reaction NAD(+) + (deoxyribonucleotide)n-3'-hydroxyl + 5'-phospho-(deoxyribonucleotide)m = (deoxyribonucleotide)n+m + AMP + beta-nicotinamide D-nucleotide.. Its function is as follows. DNA ligase that catalyzes the formation of phosphodiester linkages between 5'-phosphoryl and 3'-hydroxyl groups in double-stranded DNA using NAD as a coenzyme and as the energy source for the reaction. It is essential for DNA replication and repair of damaged DNA. This Rhodopirellula baltica (strain DSM 10527 / NCIMB 13988 / SH1) protein is DNA ligase.